Consider the following 194-residue polypeptide: Extracellular globin-E1 (194 aa).

2 Globin domains span residues 1–45 (DISH…MGLS) and 55–194 (GLSG…LRQA). Heme b is bound at residue His-150.

Belongs to the globin family. Artemia hemoglobin is a dimer of two similar sized subunits. Each subunit represents a globin chain which exists in two forms (alpha and beta), thus making possible three different phenotypes (HB1, alpha(2), HB2, alpha/beta, HB3, beta(2)). The globin chain is a polymer of eight heme-binding covalently linked domains.

The protein is Extracellular globin-E1 of Artemia sp. (Brine shrimp).